The following is a 159-amino-acid chain: Regulator of G-protein signaling 13 (159 aa).

The RGS domain maps to 34-150; sequence SFENLMATKY…LKSEMYQKLL (117 aa).

Functionally, inhibits signal transduction by increasing the GTPase activity of G protein alpha subunits thereby driving them into their inactive GDP-bound form. Binds to both G(i)-alpha and G(q)-alpha. The polypeptide is Regulator of G-protein signaling 13 (RGS13) (Homo sapiens (Human)).